A 71-amino-acid polypeptide reads, in one-letter code: Defensin-like protein 124 (71 aa).

An N-terminal signal peptide occupies residues 1–25 (MSKPTVIVIFMAILVLGMATKETQG). 4 disulfide bridges follow: cysteine 28/cysteine 71, cysteine 40/cysteine 60, cysteine 45/cysteine 65, and cysteine 49/cysteine 67.

Belongs to the DEFL family.

It localises to the secreted. The sequence is that of Defensin-like protein 124 (LCR16) from Arabidopsis thaliana (Mouse-ear cress).